Here is a 582-residue protein sequence, read N- to C-terminus: ATP-dependent lipid A-core flippase (582 aa).

The next 5 helical transmembrane spans lie at 16–36 (LWPT…ALIL), 64–84 (LLWM…TSYI), 153–173 (IIGL…ILVV), 253–273 (PIIQ…ASFP), and 275–295 (VMDS…IALM). Residues 28–310 (IVAGIALILN…LTNVNAQFQR (283 aa)) form the ABC transmembrane type-1 domain. The region spanning 342–578 (LEFRNVTFTY…HGVYAQLHKM (237 aa)) is the ABC transporter domain. ATP is bound at residue 376 to 383 (GRSGSGKS).

Belongs to the ABC transporter superfamily. Lipid exporter (TC 3.A.1.106) family. Homodimer.

Its subcellular location is the cell inner membrane. The catalysed reaction is ATP + H2O + lipid A-core oligosaccharideSide 1 = ADP + phosphate + lipid A-core oligosaccharideSide 2.. Involved in lipopolysaccharide (LPS) biosynthesis. Translocates lipid A-core from the inner to the outer leaflet of the inner membrane. Transmembrane domains (TMD) form a pore in the inner membrane and the ATP-binding domain (NBD) is responsible for energy generation. The polypeptide is ATP-dependent lipid A-core flippase (Salmonella choleraesuis (strain SC-B67)).